We begin with the raw amino-acid sequence, 229 residues long: Cilia- and flagella-associated protein 95 (229 aa).

The Extracellular portion of the chain corresponds to 1-123; the sequence is MDSLDRSCQD…LLNEETVSSG (123 aa). Asn75 is a glycosylation site (N-linked (GlcNAc...) asparagine). The chain crosses the membrane as a helical span at residues 124–140; sequence IIERVTGLPATGFGAVF. Over 141–229 the chain is Cytoplasmic; the sequence is PRHPPDWSKM…PLTSGPIVPI (89 aa). The segment at 153 to 163 is mn; that stretch reads LTTYSEDYVPP.

As to quaternary structure, microtubule inner protein component of sperm flagellar doublet microtubules. Interacts with MYH9. Interacts with MYH10. In terms of tissue distribution, expressed in undifferentiated embryonic stem cells. Expressed in airway epithelial cells.

It is found in the cytoplasm. The protein localises to the cytoskeleton. The protein resides in the cilium axoneme. It localises to the flagellum axoneme. Its subcellular location is the cell membrane. In terms of biological role, microtubule inner protein (MIP) part of the dynein-decorated doublet microtubules (DMTs) in cilia axoneme, which is required for motile cilia beating. The polypeptide is Cilia- and flagella-associated protein 95 (Homo sapiens (Human)).